Here is a 101-residue protein sequence, read N- to C-terminus: uncharacterized protein (101 aa).

Positions 1-23 (MERRTGVVLIIFVTFCEAMMARA) are cleaved as a signal peptide. The helical transmembrane segment at 38–58 (FLLFIIHTSCTMVAFIIGNLA) threads the bilayer.

The protein resides in the host membrane. This is an uncharacterized protein from Cryphonectria parasitica (Chestnut blight fungus).